The primary structure comprises 452 residues: Pup--protein ligase (452 aa).

Mg(2+) is bound at residue glutamate 9. ATP is bound at residue arginine 53. Residue tyrosine 55 coordinates Mg(2+). Aspartate 57 (proton acceptor) is an active-site residue. Glutamate 63 contacts Mg(2+). Residues threonine 66 and tryptophan 419 each contribute to the ATP site.

Belongs to the Pup ligase/Pup deamidase family. Pup-conjugating enzyme subfamily.

The enzyme catalyses ATP + [prokaryotic ubiquitin-like protein]-L-glutamate + [protein]-L-lysine = ADP + phosphate + N(6)-([prokaryotic ubiquitin-like protein]-gamma-L-glutamyl)-[protein]-L-lysine.. It functions in the pathway protein degradation; proteasomal Pup-dependent pathway. It participates in protein modification; protein pupylation. Catalyzes the covalent attachment of the prokaryotic ubiquitin-like protein modifier Pup to the proteasomal substrate proteins, thereby targeting them for proteasomal degradation. This tagging system is termed pupylation. The ligation reaction involves the side-chain carboxylate of the C-terminal glutamate of Pup and the side-chain amino group of a substrate lysine. The protein is Pup--protein ligase of Mycobacterium sp. (strain JLS).